Here is a 260-residue protein sequence, read N- to C-terminus: Adenosylcobinamide-GDP ribazoletransferase (260 aa).

Helical transmembrane passes span 7–27, 45–65, 117–137, 145–165, 187–207, and 210–230; these read WYFL…TRLP, LMGL…HWLG, AYGV…LASF, WALI…IALY, LLLG…ALAI, and WLIL…GRWF.

It belongs to the CobS family. The cofactor is Mg(2+).

It is found in the cell inner membrane. It carries out the reaction alpha-ribazole + adenosylcob(III)inamide-GDP = adenosylcob(III)alamin + GMP + H(+). It catalyses the reaction alpha-ribazole 5'-phosphate + adenosylcob(III)inamide-GDP = adenosylcob(III)alamin 5'-phosphate + GMP + H(+). Its pathway is cofactor biosynthesis; adenosylcobalamin biosynthesis; adenosylcobalamin from cob(II)yrinate a,c-diamide: step 7/7. Its function is as follows. Joins adenosylcobinamide-GDP and alpha-ribazole to generate adenosylcobalamin (Ado-cobalamin). Also synthesizes adenosylcobalamin 5'-phosphate from adenosylcobinamide-GDP and alpha-ribazole 5'-phosphate. This chain is Adenosylcobinamide-GDP ribazoletransferase, found in Synechocystis sp. (strain ATCC 27184 / PCC 6803 / Kazusa).